The following is a 139-amino-acid chain: MSKRGRGGSSGNKFRMSLGLPVGAVVNCADNTGAKNLYVISSGVRGRLNRLPAAAVGDMVMATVKKGKPDLRKKVMPAVIVRQRKPWRRKDGVFMYFEDNAGVIVNPKGEMNPSAITGPIGKECADLWPRIASAANAIV.

It belongs to the universal ribosomal protein uL14 family.

In Syntrichia ruralis (Great hairy screw-moss), this protein is Large ribosomal subunit protein uL14 (RPL23).